The sequence spans 339 residues: Terpene synthase 9 (339 aa).

The short motif at 79 to 84 (DDFLES) is the DDxx(x)D/E motif element. Positions 219-227 (NDCASYAKE) match the NDxxSxxxD/E motif motif.

Belongs to the terpene synthase family.

The catalysed reaction is (2E,6E)-farnesyl diphosphate = (-)-beta-barbatene + diphosphate. It carries out the reaction (2E,6E)-farnesyl diphosphate = (E)-beta-farnesene + diphosphate. It catalyses the reaction (2E)-geranyl diphosphate = (Z)-beta-ocimene + diphosphate. The enzyme catalyses (2E)-geranyl diphosphate + H2O = linalool + diphosphate. The catalysed reaction is (2E)-geranyl diphosphate = beta-myrcene + diphosphate. Terpene synthase that converts its substrate farnesyl diphosphate (FPP) into the sesquiterpene beta-barbatene as a major product as well as (E)-beta-farnesene as a minor product. Is also able to convert geranyl diphosphate (GPP) into a mixture of monoterpenes including (Z)-beta-ocimene, linalool, beta-myrcene, limonene and alpha-terpineol. This is Terpene synthase 9 from Dictyostelium discoideum (Social amoeba).